Reading from the N-terminus, the 761-residue chain is Cyclin-D-binding Myb-like transcription factor 1 (761 aa).

Residues 1–237 form an interaction with CCND2 region; the sequence is MSTVEEDSDT…TPEEIEKLKE (237 aa). Residues 24–51 form a disordered region; that stretch reads DTDGNLILHCPQNDPDEVDSEDSTEPPH. Residues 37–47 show a composition bias toward acidic residues; the sequence is DPDEVDSEDST. A required for transcriptional activation region spans residues 87–170; that stretch reads VTMTATTEVA…IDILMNNIER (84 aa). The interval 87 to 458 is required for DNA-binding; sequence VTMTATTEVA…DNTAISPSPM (372 aa). Residues 176 to 761 are interaction with CCND1, CCND2 and CCND3; the sequence is GIKDATEIIF…KDVEDLVNCH (586 aa). A Myb-like 1 domain is found at 225–263; the sequence is GKYTPEEIEKLKELRIKHGNDWATIGAALGRSASSVKDR. The HTH myb-type domain maps to 268–333; the sequence is KDTCNTGKWT…KWLNYLNWKQ (66 aa). Residues 306–329 constitute a DNA-binding region (H-T-H motif); that stretch reads WAAVAERVGTRSEKQCRSKWLNYL. Residues 339-388 form the Myb-like 2 domain; it reads WTKEDEINLILRIAELDVADENDINWDLLAEGWSSVRSPQWLRSKWWTIK. The segment at 459-761 is required for transcriptional activation; sequence AALQIPVQIT…KDVEDLVNCH (303 aa). 2 disordered regions span residues 584 to 625 and 740 to 761; these read SLSQ…MTIQ and GSSL…VNCH.

Belongs to the DMTF1 family. As to quaternary structure, interacts with the D-type cyclins CCND1, CCND2 and CCND3. Interaction with D-type cyclins may modulate transcriptional activation by this protein. Phosphorylated by the cyclin-D2/CDK4, cyclin-D3/CDK4 and cyclin-D2/CDK6 complexes and to a lesser extent by the cyclin-D1/CDK4 complex. In terms of tissue distribution, ubiquitously expressed (at mRNA level). Expressed in brain, intestine, kidney, lung, pancreas, skin, spleen and tongue (at protein level). Expressed at high levels in testis and thymus (at protein level). In all tissues examined, expression is predominant in non-proliferating and differentiated cell types. These include epithelial, interstitial and smooth muscle cells of the intestine, differentiated spermatids, sperm and interstitial cells of the testis, and lymphoid cells of the medullary compartment of the thymus.

It localises to the nucleus. Transcriptional activator which activates the CDKN2A/ARF locus in response to Ras-Raf signaling, thereby promoting p53/TP53-dependent growth arrest. May also cooperate with MYB to activate transcription of the ANPEP gene. Binds to the consensus sequence 5'-CCCG[GT]ATGT-3'. The sequence is that of Cyclin-D-binding Myb-like transcription factor 1 (Dmtf1) from Mus musculus (Mouse).